A 20-amino-acid polypeptide reads, in one-letter code: Succinate--CoA ligase [ADP-forming] subunit beta, mitochondrial (20 aa).

Residues 8–20 form the ATP-grasp domain; that stretch reads SMELLQEAGVSIP.

Belongs to the succinate/malate CoA ligase beta subunit family. ATP-specific subunit beta subfamily. Heterodimer of an alpha and a beta subunit. The beta subunit determines specificity for ATP. Interacts with ALAS2.

Its subcellular location is the mitochondrion. The catalysed reaction is succinate + ATP + CoA = succinyl-CoA + ADP + phosphate. The protein operates within carbohydrate metabolism; tricarboxylic acid cycle; succinate from succinyl-CoA (ligase route): step 1/1. Its function is as follows. ATP-specific succinyl-CoA synthetase functions in the citric acid cycle (TCA), coupling the hydrolysis of succinyl-CoA to the synthesis of ATP and thus represents the only step of substrate-level phosphorylation in the TCA. The beta subunit provides nucleotide specificity of the enzyme and binds the substrate succinate, while the binding sites for coenzyme A and phosphate are found in the alpha subunit. The protein is Succinate--CoA ligase [ADP-forming] subunit beta, mitochondrial of Canis lupus familiaris (Dog).